The chain runs to 619 residues: Transcription factor 7-like 2 (619 aa).

A compositionally biased stretch (gly residues) spans 1–11 (MPQLNGGGGDD). The tract at residues 1-53 (MPQLNGGGGDDLGANDELISFKDEGEQEEKSSENSSAERDLADVKSSLVNESE) is CTNNB1-binding. Residues 1–96 (MPQLNGGGGD…AKRQDGGLFK (96 aa)) are disordered. The span at 19 to 43 (ISFKDEGEQEEKSSENSSAERDLAD) shows a compositional bias: basic and acidic residues. K22 is covalently cross-linked (Glycyl lysine isopeptide (Lys-Gly) (interchain with G-Cter in SUMO2)). Residues 47 to 57 (SLVNESETNQN) show a composition bias toward polar residues. A compositionally biased stretch (basic and acidic residues) spans 63 to 91 (EAERRPPPRSESFRDKSRESLEEAAKRQD). Phosphothreonine; by NLK occurs at positions 201 and 212. The interval 201–395 (TPLITYSNEH…RRWHALSREE (195 aa)) is mediates interaction with MAD2L2. Positions 318–328 (TVKQESSQSDV) are enriched in polar residues. 4 disordered regions span residues 318–350 (TVKQ…KPHI), 420–441 (RDNY…TNEH), 496–547 (CLSP…AHLS), and 574–619 (DLPP…KSLE). K320 participates in a covalent cross-link: Glycyl lysine isopeptide (Lys-Gly) (interchain with G-Cter in SUMO). Positions 335–346 (KHQDSKKEEEKK) are enriched in basic and acidic residues. The segment at residues 350 to 418 (IKKPLNAFML…LHMQLYPGWS (69 aa)) is a DNA-binding region (HMG box). The Nuclear localization signal signature appears at 425–430 (KKKKRK). The promoter-specific activation domain stretch occupies residues 459 to 505 (SAPKKCRARFGLDQQNNWCGPCRRKKKCVRYIQGEGSCLSPPSSDGS). Residues 496–508 (CLSPPSSDGSLLD) are compositionally biased toward low complexity. A Glycyl lysine isopeptide (Lys-Gly) (interchain with G-Cter in SUMO2) cross-link involves residue K539. Low complexity predominate over residues 574–603 (DLPPAALQPAAPSSSIAQPSTSSLHSHSSL). Polar residues predominate over residues 604–619 (AGTQPQPLSLVTKSLE).

This sequence belongs to the TCF/LEF family. Interacts with TGFB1I1. Interacts with CTNNB1 (via the armadillo repeat); forms stable transcription complex. Interacts with EP300. Interacts with NLK. Interacts with CCDC85B (probably through the HMG box); prevents interaction with CTNNB1. Interacts with TNIK. Interacts with MAD2L2; prevents TCF7L2/TCF4 binding to promZIPK/DAPK3oters, negatively modulating its transcriptional activity. Interacts with ZIPK/DAPK3. Interacts with XIAP/BIRC4 and TLE3. Interacts with DDIT3/CHOP. The CTNNB1 and TCF7L2/TCF4 complex interacts with PML (isoform PML-4). Identified in a complex with CTNNB1 and FERMT2. Interacts with SPIN1. Interacts with C11orf84/SPINDOC in a SPIN1-dependent manner. Interacts with DAZAP2; the interaction results in localization of DAZAP2 to the nucleus. In terms of processing, in vitro, phosphorylated by TNIK. Post-translationally, phosphorylated at Thr-201 and/or Thr-212 by NLK. Phosphorylation by NLK at these sites inhibits DNA-binding by TCF7L2/TCF4, thereby preventing transcriptional activation of target genes of the canonical Wnt/beta-catenin signaling pathway. Polysumoylated. Sumoylation is enhanced by PIAS family members and desumoylation is enhanced by SENP2. Sumoylation/desumoylation regulates TCF7L2/TCF4 transcription activity in the Wnt/beta-catenin signaling pathway without altering interaction with CTNNB1 nor binding to DNA. Detected in epithelium from small intestine, with the highest expression at the top of the crypts and a gradient of expression from crypt to villus. Detected in colon epithelium and colon cancer, and in epithelium from mammary gland and carcinomas derived therefrom.

Its subcellular location is the nucleus. The protein localises to the PML body. Participates in the Wnt signaling pathway and modulates MYC expression by binding to its promoter in a sequence-specific manner. Acts as a repressor in the absence of CTNNB1, and as activator in its presence. Activates transcription from promoters with several copies of the Tcf motif 5'-CCTTTGATC-3' in the presence of CTNNB1. TLE1, TLE2, TLE3 and TLE4 repress transactivation mediated by TCF7L2/TCF4 and CTNNB1. Expression of dominant-negative mutants results in cell-cycle arrest in G1. Necessary for the maintenance of the epithelial stem-cell compartment of the small intestine. This Homo sapiens (Human) protein is Transcription factor 7-like 2 (TCF7L2).